The primary structure comprises 483 residues: Matrix metalloproteinase-20 (483 aa).

The signal sequence occupies residues 1-22 (MKVLPASGLAVFLIMALKFSTA). A propeptide spanning residues 23–107 (APSLVAASPR…PRCGVPDVAN (85 aa)) is cleaved from the precursor. The short motif at 98–105 (PRCGVPDV) is the Cysteine switch element. C100 is a Zn(2+) binding site. The Ca(2+) site is built by E164, A165, and D166. H176 and D178 together coordinate Zn(2+). Ca(2+)-binding residues include D183, G184, R186, and T188. Zn(2+) is bound at residue H191. Ca(2+) contacts are provided by E197, G198, G200, and D202. Residue H204 coordinates Zn(2+). Residues D206 and E209 each contribute to the Ca(2+) site. A Zn(2+)-binding site is contributed by H226. E227 is a catalytic residue. Residues H230 and H236 each contribute to the Zn(2+) site. Hemopexin repeat units lie at residues 293–343 (PDLC…FPQL), 344–389 (MSNV…GFPR), 391–439 (VQQI…FSGV), and 440–483 (NGQI…WIGC). C296 and C483 are oxidised to a cystine.

Belongs to the peptidase M10A family. Zn(2+) is required as a cofactor. Ca(2+) serves as cofactor. Autoactivates at least at the 107-Asn-|-Tyr-108 site. As to expression, expressed specifically in the enamel organ.

Its subcellular location is the secreted. The protein resides in the extracellular space. The protein localises to the extracellular matrix. Functionally, degrades amelogenin, the major protein component of the enamel matrix and two of the macromolecules characterizing the cartilage extracellular matrix: aggrecan and the cartilage oligomeric matrix protein (COMP). May play a central role in tooth enamel formation. Cleaves aggrecan at the '360-Asn-|-Phe-361' site. The sequence is that of Matrix metalloproteinase-20 (MMP20) from Homo sapiens (Human).